Consider the following 236-residue polypeptide: Phosphoribosylaminoimidazole-succinocarboxamide synthase (236 aa).

This sequence belongs to the SAICAR synthetase family.

The enzyme catalyses 5-amino-1-(5-phospho-D-ribosyl)imidazole-4-carboxylate + L-aspartate + ATP = (2S)-2-[5-amino-1-(5-phospho-beta-D-ribosyl)imidazole-4-carboxamido]succinate + ADP + phosphate + 2 H(+). It participates in purine metabolism; IMP biosynthesis via de novo pathway; 5-amino-1-(5-phospho-D-ribosyl)imidazole-4-carboxamide from 5-amino-1-(5-phospho-D-ribosyl)imidazole-4-carboxylate: step 1/2. The chain is Phosphoribosylaminoimidazole-succinocarboxamide synthase from Rickettsia africae (strain ESF-5).